Consider the following 199-residue polypeptide: 3-isopropylmalate dehydratase small subunit (199 aa).

This sequence belongs to the LeuD family. LeuD type 1 subfamily. Heterodimer of LeuC and LeuD.

It catalyses the reaction (2R,3S)-3-isopropylmalate = (2S)-2-isopropylmalate. It functions in the pathway amino-acid biosynthesis; L-leucine biosynthesis; L-leucine from 3-methyl-2-oxobutanoate: step 2/4. Catalyzes the isomerization between 2-isopropylmalate and 3-isopropylmalate, via the formation of 2-isopropylmaleate. The protein is 3-isopropylmalate dehydratase small subunit of Kocuria rhizophila (strain ATCC 9341 / DSM 348 / NBRC 103217 / DC2201).